Consider the following 203-residue polypeptide: MIGRLRGIILEKQPPLVLLETAGVGYEVHMPMTCFYELPEAGQEAIVFTHFVVREDAQLLYGFNNKQERTLFKELIKTNGVGPKLALAILSGMSAQQFVNAVEREEVASLVKLPGIGKKTAERLIVEMKDRFKGLHGDLFTPAADLVLTSPAGPTADDAEQEAVAALVALGYKPQEASRMVSKIARPDANSETLIREALRAAL.

Residues 1-64 (MIGRLRGIIL…EDAQLLYGFN (64 aa)) are domain I. The interval 65 to 142 (NKQERTLFKE…KGLHGDLFTP (78 aa)) is domain II. Positions 143-154 (AADLVLTSPAGP) are flexible linker. The tract at residues 155–203 (TADDAEQEAVAALVALGYKPQEASRMVSKIARPDANSETLIREALRAAL) is domain III.

Belongs to the RuvA family. Homotetramer. Forms an RuvA(8)-RuvB(12)-Holliday junction (HJ) complex. HJ DNA is sandwiched between 2 RuvA tetramers; dsDNA enters through RuvA and exits via RuvB. An RuvB hexamer assembles on each DNA strand where it exits the tetramer. Each RuvB hexamer is contacted by two RuvA subunits (via domain III) on 2 adjacent RuvB subunits; this complex drives branch migration. In the full resolvosome a probable DNA-RuvA(4)-RuvB(12)-RuvC(2) complex forms which resolves the HJ.

The protein resides in the cytoplasm. Its function is as follows. The RuvA-RuvB-RuvC complex processes Holliday junction (HJ) DNA during genetic recombination and DNA repair, while the RuvA-RuvB complex plays an important role in the rescue of blocked DNA replication forks via replication fork reversal (RFR). RuvA specifically binds to HJ cruciform DNA, conferring on it an open structure. The RuvB hexamer acts as an ATP-dependent pump, pulling dsDNA into and through the RuvAB complex. HJ branch migration allows RuvC to scan DNA until it finds its consensus sequence, where it cleaves and resolves the cruciform DNA. This is Holliday junction branch migration complex subunit RuvA from Klebsiella pneumoniae (strain 342).